Here is a 686-residue protein sequence, read N- to C-terminus: X-linked interleukin-1 receptor accessory protein-like 2 (686 aa).

An N-terminal signal peptide occupies residues 1–16; sequence MKPPFLLALVVCSVVS. Over 17 to 354 the chain is Extracellular; sequence TNLKMVSKRN…LLRKKDLIYK (338 aa). The region spanning 18–132 is the Ig-like C2-type 1 domain; that stretch reads NLKMVSKRNS…YCMKVSMSLT (115 aa). Cys53 and Cys116 form a disulfide bridge. N-linked (GlcNAc...) asparagine glycosylation is found at Asn63, Asn120, Asn136, Asn211, and Asn328. Ig-like C2-type domains follow at residues 141-232 and 239-347; these read CYNS…LKVT and PPKP…VLLR. 2 disulfide bridges follow: Cys162-Cys214 and Cys265-Cys331. Residues 355–375 form a helical membrane-spanning segment; sequence IELAGGLGAIFLLLVLLVVIY. The Cytoplasmic portion of the chain corresponds to 376-686; it reads KCYNIELMLF…KELSFTSDIW (311 aa). In terms of domain architecture, TIR spans 400-556; it reads KEYDAYLSYT…KFWKHLVYEM (157 aa). Glu488 is a catalytic residue.

Belongs to the interleukin-1 receptor family. Detected at low levels in fetal and adult brain, in particular in the frontal lobe, temporal lobe and cerebellum. Detected at very low levels in skin, liver, fetal ovary and in placenta.

Its subcellular location is the membrane. The enzyme catalyses NAD(+) + H2O = ADP-D-ribose + nicotinamide + H(+). In Homo sapiens (Human), this protein is X-linked interleukin-1 receptor accessory protein-like 2 (IL1RAPL2).